Here is a 523-residue protein sequence, read N- to C-terminus: Bifunctional purine biosynthesis protein PurH (523 aa).

The region spanning 1–152 (MSTDDGRRPI…KNHPSAAVVT (152 aa)) is the MGS-like domain.

It belongs to the PurH family.

It catalyses the reaction (6R)-10-formyltetrahydrofolate + 5-amino-1-(5-phospho-beta-D-ribosyl)imidazole-4-carboxamide = 5-formamido-1-(5-phospho-D-ribosyl)imidazole-4-carboxamide + (6S)-5,6,7,8-tetrahydrofolate. The enzyme catalyses IMP + H2O = 5-formamido-1-(5-phospho-D-ribosyl)imidazole-4-carboxamide. It participates in purine metabolism; IMP biosynthesis via de novo pathway; 5-formamido-1-(5-phospho-D-ribosyl)imidazole-4-carboxamide from 5-amino-1-(5-phospho-D-ribosyl)imidazole-4-carboxamide (10-formyl THF route): step 1/1. Its pathway is purine metabolism; IMP biosynthesis via de novo pathway; IMP from 5-formamido-1-(5-phospho-D-ribosyl)imidazole-4-carboxamide: step 1/1. The polypeptide is Bifunctional purine biosynthesis protein PurH (Mycobacterium bovis (strain BCG / Pasteur 1173P2)).